The following is a 313-amino-acid chain: Pseudouridine-5'-phosphate glycosidase (313 aa).

Catalysis depends on Glu34, which acts as the Proton donor. The substrate site is built by Lys95 and Val115. Residue Asp147 participates in Mn(2+) binding. A substrate-binding site is contributed by 149–151 (SAD). Lys168 serves as the catalytic Nucleophile.

This sequence belongs to the pseudouridine-5'-phosphate glycosidase family. As to quaternary structure, homotrimer. Requires Mn(2+) as cofactor.

The catalysed reaction is D-ribose 5-phosphate + uracil = psi-UMP + H2O. Catalyzes the reversible cleavage of pseudouridine 5'-phosphate (PsiMP) to ribose 5-phosphate and uracil. Functions biologically in the cleavage direction, as part of a pseudouridine degradation pathway. This chain is Pseudouridine-5'-phosphate glycosidase, found in Deinococcus radiodurans (strain ATCC 13939 / DSM 20539 / JCM 16871 / CCUG 27074 / LMG 4051 / NBRC 15346 / NCIMB 9279 / VKM B-1422 / R1).